A 926-amino-acid chain; its full sequence is DNA mismatch repair protein MutS (926 aa).

Residues 1-67 are disordered; that stretch reads MAASPNPLQG…NPNQINDLDQ (67 aa). Polar residues-rich tracts occupy residues 18–44 and 57–67; these read QSTT…QLKS and KNPNQINDLDQ. Residue 726-733 coordinates ATP; the sequence is GPNASGKS.

This sequence belongs to the DNA mismatch repair MutS family.

Functionally, this protein is involved in the repair of mismatches in DNA. It is possible that it carries out the mismatch recognition step. This protein has a weak ATPase activity. The polypeptide is DNA mismatch repair protein MutS (Prochlorococcus marinus (strain NATL1A)).